Here is a 616-residue protein sequence, read N- to C-terminus: Ectonucleoside triphosphate diphosphohydrolase 4 (616 aa).

Residues 1–33 (MGRIGISCLFPASWHFSISPVGCPRILNTNLRQ) lie on the Cytoplasmic side of the membrane. The helical transmembrane segment at 34–54 (IMVISVLAAAVSLLYFSVVII) threads the bilayer. The Lumenal segment spans residues 55 to 559 (RNKYGRLTRD…ASHTHWRGVS (505 aa)). Glu222 functions as the Proton acceptor in the catalytic mechanism. Cys368 and Cys395 are oxidised to a cystine. 2 N-linked (GlcNAc...) asparagine glycosylation sites follow: Asn404 and Asn407. Cys461 and Cys490 are disulfide-bonded. The chain crosses the membrane as a helical span at residues 560-580 (FVYNHYLFSGCFLVVLLAILL). Over 581–616 (YLLRLRRIHRRTPRSSSAAALWMEEGLPAQNAPGTL) the chain is Cytoplasmic.

This sequence belongs to the GDA1/CD39 NTPase family. Ca(2+) serves as cofactor. Mg(2+) is required as a cofactor. As to expression, ubiquitous. Highest expression in testis and lowest in bladder.

It localises to the cytoplasmic vesicle. Its subcellular location is the autophagosome membrane. The protein resides in the lysosome membrane. It is found in the golgi apparatus membrane. The catalysed reaction is a ribonucleoside 5'-diphosphate + H2O = a ribonucleoside 5'-phosphate + phosphate + H(+). It carries out the reaction a ribonucleoside 5'-triphosphate + H2O = a ribonucleoside 5'-diphosphate + phosphate + H(+). It catalyses the reaction UDP + H2O = UMP + phosphate + H(+). The enzyme catalyses UTP + H2O = UDP + phosphate + H(+). The catalysed reaction is CTP + H2O = CDP + phosphate + H(+). It carries out the reaction GDP + H2O = GMP + phosphate + H(+). It catalyses the reaction GTP + H2O = GDP + phosphate + H(+). The enzyme catalyses 5-methyl-UTP + H2O = 5-methyl-UDP + phosphate + H(+). Functionally, catalyzes the hydrolysis of nucleoside triphosphates and diphosphates in a calcium- or magnesium-dependent manner, with a preference for pyrimidines. Preferentially hydrolyzes UTP and TTP. AMP, ADP, ATP and UMP are not substrates. Preferentially activated by Ca(2+) over Mg(2+). Has a broad substrate specificity with the ability of cleaving all nucleotide di- and triphosphates with the exception of adenosine di- and triphosphate (ADP and ATP). Preferentially hydrolyzes CTP, UDP, CDP, GTP and GDP. Can use either Ca(2+) or Mg(2+) equally. In Homo sapiens (Human), this protein is Ectonucleoside triphosphate diphosphohydrolase 4.